A 148-amino-acid chain; its full sequence is Single-stranded DNA-binding protein 2 (148 aa).

An SSB domain is found at 4 to 109; that stretch reads INSVIIAGNL…IKARRIQFLN (106 aa).

As to quaternary structure, homotetramer.

The protein is Single-stranded DNA-binding protein 2 (ssb2) of Chlorobaculum tepidum (strain ATCC 49652 / DSM 12025 / NBRC 103806 / TLS) (Chlorobium tepidum).